A 404-amino-acid polypeptide reads, in one-letter code: L-cysteine:1D-myo-inositol 2-amino-2-deoxy-alpha-D-glucopyranoside ligase 1 (404 aa).

Zn(2+) is bound at residue Cys47. L-cysteinyl-5'-AMP is bound by residues 47–50 (CGIT), Thr62, and 85–87 (NIT). The 'HIGH' region motif lies at 49–59 (ITPYDSTHLGH). The 'ERGGDP' region signature appears at 188–193 (ERGGDP). Trp228 contributes to the L-cysteinyl-5'-AMP binding site. Cys232 serves as a coordination point for Zn(2+). An L-cysteinyl-5'-AMP-binding site is contributed by 250-252 (GSD). Residue His257 coordinates Zn(2+). Residue Ile284 coordinates L-cysteinyl-5'-AMP. The 'KMSKS' region motif lies at 290 to 294 (KMSKS).

Belongs to the class-I aminoacyl-tRNA synthetase family. MshC subfamily. As to quaternary structure, monomer. It depends on Zn(2+) as a cofactor.

It carries out the reaction 1D-myo-inositol 2-amino-2-deoxy-alpha-D-glucopyranoside + L-cysteine + ATP = 1D-myo-inositol 2-(L-cysteinylamino)-2-deoxy-alpha-D-glucopyranoside + AMP + diphosphate + H(+). Catalyzes the ATP-dependent condensation of GlcN-Ins and L-cysteine to form L-Cys-GlcN-Ins. The polypeptide is L-cysteine:1D-myo-inositol 2-amino-2-deoxy-alpha-D-glucopyranoside ligase 1 (Corynebacterium jeikeium (strain K411)).